A 180-amino-acid chain; its full sequence is Crossover junction endodeoxyribonuclease RuvC (180 aa).

Residues aspartate 7, glutamate 66, and aspartate 138 contribute to the active site. Mg(2+) contacts are provided by aspartate 7, glutamate 66, and aspartate 138.

The protein belongs to the RuvC family. In terms of assembly, homodimer which binds Holliday junction (HJ) DNA. The HJ becomes 2-fold symmetrical on binding to RuvC with unstacked arms; it has a different conformation from HJ DNA in complex with RuvA. In the full resolvosome a probable DNA-RuvA(4)-RuvB(12)-RuvC(2) complex forms which resolves the HJ. It depends on Mg(2+) as a cofactor.

Its subcellular location is the cytoplasm. The enzyme catalyses Endonucleolytic cleavage at a junction such as a reciprocal single-stranded crossover between two homologous DNA duplexes (Holliday junction).. Its function is as follows. The RuvA-RuvB-RuvC complex processes Holliday junction (HJ) DNA during genetic recombination and DNA repair. Endonuclease that resolves HJ intermediates. Cleaves cruciform DNA by making single-stranded nicks across the HJ at symmetrical positions within the homologous arms, yielding a 5'-phosphate and a 3'-hydroxyl group; requires a central core of homology in the junction. The consensus cleavage sequence is 5'-(A/T)TT(C/G)-3'. Cleavage occurs on the 3'-side of the TT dinucleotide at the point of strand exchange. HJ branch migration catalyzed by RuvA-RuvB allows RuvC to scan DNA until it finds its consensus sequence, where it cleaves and resolves the cruciform DNA. The sequence is that of Crossover junction endodeoxyribonuclease RuvC from Paraburkholderia phymatum (strain DSM 17167 / CIP 108236 / LMG 21445 / STM815) (Burkholderia phymatum).